Consider the following 241-residue polypeptide: L-aspartate dehydrogenase (241 aa).

Residues 10–11, Asp-28, 56–57, 63–64, 78–79, Ala-109, and Asn-164 contribute to the NAD(+) site; these read NI, AS, EY, and IS. His-193 is a catalytic residue.

It belongs to the L-aspartate dehydrogenase family. In terms of assembly, homodimer.

The enzyme catalyses L-aspartate + NADP(+) + H2O = oxaloacetate + NH4(+) + NADPH + H(+). It carries out the reaction L-aspartate + NAD(+) + H2O = oxaloacetate + NH4(+) + NADH + H(+). It participates in cofactor biosynthesis; NAD(+) biosynthesis; iminoaspartate from L-aspartate (dehydrogenase route): step 1/1. Its activity is regulated as follows. Competitively inhibited by L-malate and NH(4)(+). Its function is as follows. Specifically catalyzes the NAD or NADP-dependent dehydrogenation of L-aspartate to iminoaspartate. Does not show aspartate oxidase activity. Is also able to catalyze the reverse reaction, i.e. the reductive amination of oxaloacetate. The protein is L-aspartate dehydrogenase of Thermotoga maritima (strain ATCC 43589 / DSM 3109 / JCM 10099 / NBRC 100826 / MSB8).